Reading from the N-terminus, the 37-residue chain is Photosystem I reaction center subunit VIII (37 aa).

Residues 9–29 traverse the membrane as a helical segment; sequence SIFVPLVGLVFPAIAMASLFL.

Belongs to the PsaI family.

It is found in the plastid. The protein localises to the chloroplast thylakoid membrane. In terms of biological role, may help in the organization of the PsaL subunit. This chain is Photosystem I reaction center subunit VIII, found in Cucumis sativus (Cucumber).